A 170-amino-acid polypeptide reads, in one-letter code: MKKPTSAPRSKAFGKQRRKTREELNQEARDRKRLKKHRGHAPGSRAAGGKPASGGGNQNQQKDPRIGSKTPIPLGVTEKVTQQHKPKSEKLMLSPQAELDLLETDERLDALLERLEAGETLNAEDQAWVDAKLDRIDELMQKLGLSYDDEEDEEEDEKQEDMMRLLRGGN.

Disordered regions lie at residues 1 to 96 (MKKP…LSPQ) and 145 to 170 (LSYD…RGGN). The segment covering 20–30 (TREELNQEARD) has biased composition (basic and acidic residues). Basic residues predominate over residues 31–40 (RKRLKKHRGH). Positions 147–159 (YDDEEDEEEDEKQ) are enriched in acidic residues.

The protein belongs to the YihI family. Interacts with Der.

Functionally, a GTPase-activating protein (GAP) that modifies Der/EngA GTPase function. May play a role in ribosome biogenesis. The chain is Der GTPase-activating protein YihI from Salmonella arizonae (strain ATCC BAA-731 / CDC346-86 / RSK2980).